A 431-amino-acid chain; its full sequence is Gamma-glutamyl phosphate reductase (431 aa).

Belongs to the gamma-glutamyl phosphate reductase family.

The protein localises to the cytoplasm. It carries out the reaction L-glutamate 5-semialdehyde + phosphate + NADP(+) = L-glutamyl 5-phosphate + NADPH + H(+). The protein operates within amino-acid biosynthesis; L-proline biosynthesis; L-glutamate 5-semialdehyde from L-glutamate: step 2/2. Catalyzes the NADPH-dependent reduction of L-glutamate 5-phosphate into L-glutamate 5-semialdehyde and phosphate. The product spontaneously undergoes cyclization to form 1-pyrroline-5-carboxylate. The chain is Gamma-glutamyl phosphate reductase from Beijerinckia indica subsp. indica (strain ATCC 9039 / DSM 1715 / NCIMB 8712).